The following is a 250-amino-acid chain: Type III pantothenate kinase (250 aa).

13–20 (DVGNSYLK) is a binding site for ATP. 110-113 (GNDL) serves as a coordination point for substrate. Asp-112 acts as the Proton acceptor in catalysis. Thr-134 lines the ATP pocket. Thr-186 is a substrate binding site.

The protein belongs to the type III pantothenate kinase family. In terms of assembly, homodimer. NH4(+) is required as a cofactor. It depends on K(+) as a cofactor.

The protein resides in the cytoplasm. It catalyses the reaction (R)-pantothenate + ATP = (R)-4'-phosphopantothenate + ADP + H(+). It participates in cofactor biosynthesis; coenzyme A biosynthesis; CoA from (R)-pantothenate: step 1/5. Catalyzes the phosphorylation of pantothenate (Pan), the first step in CoA biosynthesis. The protein is Type III pantothenate kinase of Mycoplasmopsis synoviae (strain 53) (Mycoplasma synoviae).